We begin with the raw amino-acid sequence, 245 residues long: 4-hydroxy-tetrahydrodipicolinate reductase (245 aa).

NAD(+) is bound by residues glycine 7–valine 12, glycine 75–threonine 77, and alanine 102–phenylalanine 105. The Proton donor/acceptor role is filled by histidine 132. Histidine 133 is a (S)-2,3,4,5-tetrahydrodipicolinate binding site. The Proton donor role is filled by lysine 136. A (S)-2,3,4,5-tetrahydrodipicolinate-binding site is contributed by glycine 142 to threonine 143.

The protein belongs to the DapB family.

The protein resides in the cytoplasm. The catalysed reaction is (S)-2,3,4,5-tetrahydrodipicolinate + NAD(+) + H2O = (2S,4S)-4-hydroxy-2,3,4,5-tetrahydrodipicolinate + NADH + H(+). It carries out the reaction (S)-2,3,4,5-tetrahydrodipicolinate + NADP(+) + H2O = (2S,4S)-4-hydroxy-2,3,4,5-tetrahydrodipicolinate + NADPH + H(+). It functions in the pathway amino-acid biosynthesis; L-lysine biosynthesis via DAP pathway; (S)-tetrahydrodipicolinate from L-aspartate: step 4/4. Its function is as follows. Catalyzes the conversion of 4-hydroxy-tetrahydrodipicolinate (HTPA) to tetrahydrodipicolinate. The polypeptide is 4-hydroxy-tetrahydrodipicolinate reductase (Mycobacterium sp. (strain KMS)).